Reading from the N-terminus, the 340-residue chain is Dihydroorotate dehydrogenase (quinone) (340 aa).

Residues 61 to 65 (AGLDK) and T85 contribute to the FMN site. Residue K65 coordinates substrate. 110 to 114 (NRMGF) is a substrate binding site. The FMN site is built by N138 and N171. N171 contacts substrate. S174 acts as the Nucleophile in catalysis. N176 contacts substrate. FMN is bound by residues K216 and T244. Residue 245–246 (NT) participates in substrate binding. FMN is bound by residues G267, G296, and 317–318 (YS).

The protein belongs to the dihydroorotate dehydrogenase family. Type 2 subfamily. In terms of assembly, monomer. It depends on FMN as a cofactor.

It is found in the cell membrane. It catalyses the reaction (S)-dihydroorotate + a quinone = orotate + a quinol. It participates in pyrimidine metabolism; UMP biosynthesis via de novo pathway; orotate from (S)-dihydroorotate (quinone route): step 1/1. Functionally, catalyzes the conversion of dihydroorotate to orotate with quinone as electron acceptor. The protein is Dihydroorotate dehydrogenase (quinone) of Ectopseudomonas mendocina (strain ymp) (Pseudomonas mendocina).